The chain runs to 218 residues: Urease accessory protein UreG (218 aa).

22 to 29 provides a ligand contact to GTP; that stretch reads GPVGSGKT.

This sequence belongs to the SIMIBI class G3E GTPase family. UreG subfamily. In terms of assembly, homodimer. UreD, UreF and UreG form a complex that acts as a GTP-hydrolysis-dependent molecular chaperone, activating the urease apoprotein by helping to assemble the nickel containing metallocenter of UreC. The UreE protein probably delivers the nickel.

Its subcellular location is the cytoplasm. Functionally, facilitates the functional incorporation of the urease nickel metallocenter. This process requires GTP hydrolysis, probably effectuated by UreG. This chain is Urease accessory protein UreG, found in Polaromonas naphthalenivorans (strain CJ2).